The sequence spans 918 residues: uncharacterized protein (918 aa).

Disordered regions lie at residues 66–150 (AMVH…SSYG), 226–283 (GADG…NADF), 326–481 (ADGT…EFGN), 515–548 (ALEK…GSNL), 594–707 (EITH…NAVK), 737–774 (NHSN…SHLT), and 800–918 (HITH…IIQM). The segment covering 79-89 (QSSGSSSNTHS) has biased composition (low complexity). A compositionally biased stretch (basic and acidic residues) spans 103–127 (NSEKKDGYNKESKVDEANENTKIKS). Positions 270–281 (SKKAASASGSNA) are enriched in low complexity. Polar residues-rich tracts occupy residues 326-354 (ADGT…SSDL), 363-372 (KSHSTSNKTD), and 379-404 (ANQS…SSIE). Low complexity predominate over residues 430–441 (SSSHSKSASGTS). Positions 515–533 (ALEKNHEKNSDGTFKDESK) are enriched in basic and acidic residues. Polar residues-rich tracts occupy residues 534-545 (GSNSRVNRTDGG) and 604-619 (VAAS…TSMS). Residues 632–647 (SSQAADSHDAISASSD) are compositionally biased toward low complexity. Residues 648-660 (VDAKIVKHADRSE) show a composition bias toward basic and acidic residues. Positions 661–672 (SISNDSSNQTAS) are enriched in polar residues. A compositionally biased stretch (basic and acidic residues) spans 673-688 (EHNDSSKQSEHEKRQN). The span at 689-702 (ADGSFSDVSSNSAK) shows a compositional bias: polar residues. Basic and acidic residues-rich tracts occupy residues 738–765 (HSND…DAKH), 800–814 (HITH…DAGH), 830–846 (EGFK…EGAQ), and 883–918 (LAKD…IIQM).

This is an uncharacterized protein from Caenorhabditis elegans.